A 449-amino-acid polypeptide reads, in one-letter code: 23S rRNA (uracil(1939)-C(5))-methyltransferase RlmD (449 aa).

Residues 1 to 66 (MGRSRYHNKL…AKFDEAKVVE (66 aa)) form the TRAM domain. The [4Fe-4S] cluster site is built by C79, C85, C88, and C169. The S-adenosyl-L-methionine site is built by Q280, F309, N314, E330, N357, and D379. C405 serves as the catalytic Nucleophile.

It belongs to the class I-like SAM-binding methyltransferase superfamily. RNA M5U methyltransferase family. RlmD subfamily.

The catalysed reaction is uridine(1939) in 23S rRNA + S-adenosyl-L-methionine = 5-methyluridine(1939) in 23S rRNA + S-adenosyl-L-homocysteine + H(+). Catalyzes the formation of 5-methyl-uridine at position 1939 (m5U1939) in 23S rRNA. This chain is 23S rRNA (uracil(1939)-C(5))-methyltransferase RlmD, found in Francisella tularensis subsp. holarctica (strain LVS).